The following is a 210-amino-acid chain: T-cell surface glycoprotein CD8 beta-2 chain (210 aa).

Residues 1 to 18 (MRPRLWLLLAAQLTVLHG) form the signal peptide. In terms of domain architecture, Ig-like V-type spans 19-132 (NSVLQQTPAY…ELTFGKGTQL (114 aa)). Topologically, residues 19-170 (NSVLQQTPAY…ETQKGPLCSP (152 aa)) are extracellular. Cysteine 41 and cysteine 116 are joined by a disulfide. The N-linked (GlcNAc...) asparagine glycan is linked to asparagine 102. The helical transmembrane segment at 171-191 (VTLGLLVAGVLVLLVSLGVAM) threads the bilayer. Over 192–210 (HLCCRRRRARLRFMKQFYK) the chain is Cytoplasmic.

In general heterodimer of an alpha and a beta chain linked by two disulfide bonds.

The protein resides in the cell membrane. In terms of biological role, identifies cytotoxic/suppressor T-cells that interact with MHC class I bearing targets. CD8 is thought to play a role in the process of T-cell mediated killing. The polypeptide is T-cell surface glycoprotein CD8 beta-2 chain (Homo sapiens (Human)).